The following is a 220-amino-acid chain: Tegument protein UL51 homolog (220 aa).

Cysteine 11 carries the S-palmitoyl cysteine; by host lipid modification.

This sequence belongs to the herpesviridae UL51 family. As to quaternary structure, oligomerizes. Interacts with UL7 homolog; this interaction mediates UL7 homolog incorporation to virions. In terms of processing, phosphorylated. Post-translationally, palmitoylation is necessary for Golgi localization.

The protein resides in the virion tegument. It is found in the host cytoplasm. Its subcellular location is the host Golgi apparatus. Functionally, plays several roles during the time course of infection, including egress of virus particles from the perinuclear space and secondary envelopment of cytoplasmic capsids that bud into specific trans-Golgi network (TGN)-derived membranes. The chain is Tegument protein UL51 homolog (55) from Connochaetes taurinus (Blue wildebeest).